The following is a 312-amino-acid chain: Ribosomal protein L11 methyltransferase (312 aa).

S-adenosyl-L-methionine-binding residues include Thr-162, Gly-183, Asp-205, and Asn-248.

The protein belongs to the methyltransferase superfamily. PrmA family.

The protein resides in the cytoplasm. It carries out the reaction L-lysyl-[protein] + 3 S-adenosyl-L-methionine = N(6),N(6),N(6)-trimethyl-L-lysyl-[protein] + 3 S-adenosyl-L-homocysteine + 3 H(+). In terms of biological role, methylates ribosomal protein L11. In Anoxybacillus flavithermus (strain DSM 21510 / WK1), this protein is Ribosomal protein L11 methyltransferase.